The primary structure comprises 425 residues: Formyl-CoA:oxalate CoA-transferase (425 aa).

Residues glutamine 17–serine 18, arginine 38, leucine 72–lysine 75, asparagine 96–glycine 98, arginine 104, and lysine 136–glutamate 139 each bind CoA. The active-site Nucleophile is aspartate 168. Glycine 247–glutamine 249 provides a ligand contact to substrate.

This sequence belongs to the CoA-transferase III family. Frc subfamily. In terms of assembly, homodimer.

It catalyses the reaction formyl-CoA + oxalate = oxalyl-CoA + formate. It participates in metabolic intermediate degradation; oxalate degradation; CO(2) and formate from oxalate: step 1/2. Its function is as follows. Involved in the catabolism of oxalate and in the adapatation to low pH via the induction of the oxalate-dependent acid tolerance response (ATR). Catalyzes the transfer of the CoA moiety from formyl-CoA to oxalate. The polypeptide is Formyl-CoA:oxalate CoA-transferase (Rhodopseudomonas palustris (strain ATCC BAA-98 / CGA009)).